We begin with the raw amino-acid sequence, 200 residues long: Peroxiredoxin (200 aa).

Residues 6 to 165 (AQIGKPAPEF…TLRLVQAFQH (160 aa)) enclose the Thioredoxin domain. Cys-52 acts as the Cysteine sulfenic acid (-SOH) intermediate in catalysis.

It belongs to the peroxiredoxin family. AhpC/Prx1 subfamily. Homodimer; disulfide-linked, upon oxidation.

The enzyme catalyses a hydroperoxide + [thioredoxin]-dithiol = an alcohol + [thioredoxin]-disulfide + H2O. Its function is as follows. Thiol-specific peroxidase that catalyzes the reduction of hydrogen peroxide and organic hydroperoxides to water and alcohols, respectively. Plays a role in cell protection against oxidative stress by detoxifying peroxides and as sensor of hydrogen peroxide-mediated signaling events. In Cynops pyrrhogaster (Japanese fire-bellied newt), this protein is Peroxiredoxin.